The primary structure comprises 484 residues: MITIDKILEILKNDHNFREILFHEHYYYNWTQNVTFNALSYDSRQISSDTLFFAKGATFKKEYLDSAITAGLSFYVSEIDYGADIPVILVNDIKKAMSLISMSFYNNPQNKLKLLAFTGTKGKTTAAYFAYHMLKVNHRPAMLSTMNTTLDGKSFFKSHLTTPESLDLFRMMATAVENQMTHLVMEVSSQAYLTKRVYGLTFDVGVFLNISPDHIGPIEHPTFEDYFFHKRLLMENSNAVVVNSQMDHFNIVKEQVEYIPHDFYGDYSENVITESQAFSFHVKGKLENTYDIKLIGKFNQENAIAAGLACLRLGVSIEDIKNGIAQTTVPGRMEVLTQTNGAKIFVDYAHNGDSLKKLLAVVEEHQKGDIILVLGAPGNKGQSRRKDFGDVINQHPNLQVILTADDPNFEDPLVISQEIASHINRPVTIIIDREEAIANASTLTNCKLDAIIIAGKGADAYQIIKGNRDNYSGDLEVAKKYLKR.

Serine 43 lines the UDP-N-acetyl-alpha-D-muramoyl-L-alanyl-D-glutamate pocket. 119–125 (GTKGKTT) contributes to the ATP binding site. Residues 161–162 (TT), serine 188, and arginine 196 contribute to the UDP-N-acetyl-alpha-D-muramoyl-L-alanyl-D-glutamate site. Position 230 is an N6-carboxylysine (lysine 230). The L-lysine recognition motif signature appears at 405–408 (DDPN).

Belongs to the MurCDEF family. MurE subfamily. Post-translationally, carboxylation is probably crucial for Mg(2+) binding and, consequently, for the gamma-phosphate positioning of ATP.

The protein localises to the cytoplasm. It carries out the reaction UDP-N-acetyl-alpha-D-muramoyl-L-alanyl-D-glutamate + L-lysine + ATP = UDP-N-acetyl-alpha-D-muramoyl-L-alanyl-gamma-D-glutamyl-L-lysine + ADP + phosphate + H(+). It participates in cell wall biogenesis; peptidoglycan biosynthesis. Its function is as follows. Catalyzes the addition of L-lysine to the nucleotide precursor UDP-N-acetylmuramoyl-L-alanyl-D-glutamate (UMAG) in the biosynthesis of bacterial cell-wall peptidoglycan. This chain is UDP-N-acetylmuramoyl-L-alanyl-D-glutamate--L-lysine ligase, found in Streptococcus agalactiae serotype III (strain NEM316).